Consider the following 1060-residue polypeptide: Carbamoyl phosphate synthase large chain (1060 aa).

Residues 1 to 401 (MPKRTDIKKI…SLLKAVRSLE (401 aa)) are carboxyphosphate synthetic domain. Residues Arg-129, Arg-169, Gly-175, Gly-176, Lys-208, Ile-210, Glu-215, Gly-241, Ile-242, His-243, Gln-284, and Glu-298 each contribute to the ATP site. The ATP-grasp 1 domain maps to 133–327 (KQLMEELEQP…IAKLAAKIAV (195 aa)). Residues Gln-284, Glu-298, and Asn-300 each coordinate Mg(2+). 3 residues coordinate Mn(2+): Gln-284, Glu-298, and Asn-300. Residues 402–546 (IGAYHNELAE…YSTYEVENES (145 aa)) are oligomerization domain. Residues 547-929 (NVSKKPSVLV…ALYKAFEASG (383 aa)) form a carbamoyl phosphate synthetic domain region. Positions 671–861 (EQALQELAIP…MAQVATKAIL (191 aa)) constitute an ATP-grasp 2 domain. The ATP site is built by Arg-707, Ser-746, Leu-748, Glu-752, Gly-777, Val-778, His-779, Ser-780, Gln-820, and Glu-832. Positions 820, 832, and 834 each coordinate Mg(2+). The Mn(2+) site is built by Gln-820, Glu-832, and Asn-834. Positions 930–1060 (LHLPSYGAVL…ESRAFTTEAI (131 aa)) constitute an MGS-like domain. The allosteric domain stretch occupies residues 930 to 1060 (LHLPSYGAVL…ESRAFTTEAI (131 aa)).

The protein belongs to the CarB family. Composed of two chains; the small (or glutamine) chain promotes the hydrolysis of glutamine to ammonia, which is used by the large (or ammonia) chain to synthesize carbamoyl phosphate. Tetramer of heterodimers (alpha,beta)4. The cofactor is Mg(2+). Requires Mn(2+) as cofactor.

It carries out the reaction hydrogencarbonate + L-glutamine + 2 ATP + H2O = carbamoyl phosphate + L-glutamate + 2 ADP + phosphate + 2 H(+). The enzyme catalyses hydrogencarbonate + NH4(+) + 2 ATP = carbamoyl phosphate + 2 ADP + phosphate + 2 H(+). It participates in amino-acid biosynthesis; L-arginine biosynthesis; carbamoyl phosphate from bicarbonate: step 1/1. Its pathway is pyrimidine metabolism; UMP biosynthesis via de novo pathway; (S)-dihydroorotate from bicarbonate: step 1/3. Large subunit of the glutamine-dependent carbamoyl phosphate synthetase (CPSase). CPSase catalyzes the formation of carbamoyl phosphate from the ammonia moiety of glutamine, carbonate, and phosphate donated by ATP, constituting the first step of 2 biosynthetic pathways, one leading to arginine and/or urea and the other to pyrimidine nucleotides. The large subunit (synthetase) binds the substrates ammonia (free or transferred from glutamine from the small subunit), hydrogencarbonate and ATP and carries out an ATP-coupled ligase reaction, activating hydrogencarbonate by forming carboxy phosphate which reacts with ammonia to form carbamoyl phosphate. The polypeptide is Carbamoyl phosphate synthase large chain (Enterococcus faecalis (strain ATCC 700802 / V583)).